Consider the following 648-residue polypeptide: Probable potassium transport system protein Kup 1 (648 aa).

Helical transmembrane passes span 25 to 45 (LTLGALGVVFGDIGTSPIYAF), 57 to 77 (IVAGEILGVLSLALWALILVV), 113 to 133 (LVMALGAIGAALFYGDGVITP), 153 to 173 (SVSRGEILLITSAILIGLFLM), 184 to 204 (LFGPVCLVWFVTIGGIGLIHI), 219 to 239 (GVLFMANHGVAGMFVMGAVFL), 263 to 283 (WLAIVFPALALNYLGQGAFAL), 312 to 332 (IPLVILATCATVIASQAVITG), 362 to 382 (IYLPTITMLLFVGVMVLVLGF), 391 to 411 (AYGVSVSGTMVVTTCLAFLVV), 417 to 437 (WGWPLTVAVIVPLLLLDLFFF), and 446 to 466 (EGGWVPLIVAGGVGLLIVTWV).

This sequence belongs to the HAK/KUP transporter (TC 2.A.72) family.

Its subcellular location is the cell inner membrane. The enzyme catalyses K(+)(in) + H(+)(in) = K(+)(out) + H(+)(out). Functionally, transport of potassium into the cell. Likely operates as a K(+):H(+) symporter. In Rhizorhabdus wittichii (strain DSM 6014 / CCUG 31198 / JCM 15750 / NBRC 105917 / EY 4224 / RW1) (Sphingomonas wittichii), this protein is Probable potassium transport system protein Kup 1.